The chain runs to 865 residues: Leucine--tRNA ligase (865 aa).

The 'HIGH' region motif lies at 48–58 (PYPSGQLHVGH). The short motif at 626–630 (KMSKS) is the 'KMSKS' region element. Lysine 629 contacts ATP.

It belongs to the class-I aminoacyl-tRNA synthetase family.

It localises to the cytoplasm. The catalysed reaction is tRNA(Leu) + L-leucine + ATP = L-leucyl-tRNA(Leu) + AMP + diphosphate. This Gluconobacter oxydans (strain 621H) (Gluconobacter suboxydans) protein is Leucine--tRNA ligase.